The following is a 2860-amino-acid chain: Methylcytosine dioxygenase TET (2860 aa).

Disordered regions lie at residues histidine 51–glutamine 255 and glycine 457–serine 562. The segment covering histidine 57 to glutamine 70 has biased composition (basic residues). 2 stretches are compositionally biased toward low complexity: residues glutamine 71–glycine 181 and alanine 191–serine 231. Over residues threonine 468–proline 482 the composition is skewed to polar residues. Low complexity-rich tracts occupy residues histidine 492–proline 508 and serine 536–serine 546. The CXXC-type zinc-finger motif lies at serine 591–glutamate 631. 8 residues coordinate Zn(2+): cysteine 598, cysteine 601, cysteine 604, cysteine 610, cysteine 613, cysteine 616, cysteine 625, and cysteine 630. Disordered regions lie at residues glycine 641–glutamine 734, glutamine 771–glutamine 810, glutamine 920–alanine 1113, arginine 1130–glycine 1155, leucine 1170–glutamine 1195, alanine 1209–tyrosine 1356, and glycine 1437–histidine 1460. The span at threonine 692–serine 706 shows a compositional bias: low complexity. A compositionally biased stretch (polar residues) spans leucine 718 to leucine 732. Composition is skewed to low complexity over residues glutamine 771–threonine 804, glutamine 930–glutamine 942, and alanine 985–threonine 1021. Over residues proline 1040–leucine 1054 the composition is skewed to polar residues. Low complexity predominate over residues glutamine 1076–glutamine 1085. Over residues histidine 1086–tryptophan 1097 the composition is skewed to polar residues. A compositionally biased stretch (low complexity) spans leucine 1141–glutamine 1153. Low complexity-rich tracts occupy residues glutamine 1248–glutamine 1263 and serine 1299–alanine 1312. The span at proline 1337–glycine 1349 shows a compositional bias: pro residues. Zn(2+) is bound by residues cysteine 1638, cysteine 1640, cysteine 1699, histidine 1725, and cysteine 1727. Positions leucine 1657–arginine 2666 are interaction with wds. 2-oxoglutarate is bound at residue arginine 1767. Residues cysteine 1777, cysteine 1779, cysteine 1795, cysteine 1804, and cysteine 1862 each coordinate Zn(2+). A 2-oxoglutarate-binding site is contributed by cysteine 1878. Position 1884 (histidine 1884) interacts with Zn(2+). Histidine 1886 and aspartate 1888 together coordinate Fe cation. Asparagine 1891 is a substrate binding site. Histidine 1919 contacts 2-oxoglutarate. Disordered stretches follow at residues proline 1966–serine 2115, leucine 2198–alanine 2229, serine 2263–glutamate 2334, alanine 2350–aspartate 2371, methionine 2422–histidine 2444, and leucine 2536–lysine 2598. Over residues glutamate 1979–alanine 1989 the composition is skewed to acidic residues. Composition is skewed to low complexity over residues alanine 1993–serine 2015 and glycine 2029–glycine 2059. The segment covering arginine 2069 to serine 2086 has biased composition (polar residues). The segment covering proline 2212–alanine 2229 has biased composition (low complexity). The segment covering serine 2263 to valine 2275 has biased composition (polar residues). Over residues glutamine 2276 to glutamine 2285 the composition is skewed to low complexity. A compositionally biased stretch (gly residues) spans glycine 2290 to proline 2304. Residues glutamine 2426–proline 2437 are compositionally biased toward pro residues. Residues serine 2540–aspartate 2562 show a composition bias toward polar residues. Low complexity predominate over residues alanine 2570–threonine 2594. Histidine 2642 contacts Fe cation. Residue arginine 2657–threonine 2659 participates in 2-oxoglutarate binding. Tyrosine 2663–histidine 2665 contacts substrate. Residue histidine 2673 coordinates Zn(2+). The segment at lysine 2729–threonine 2860 is disordered. Residues serine 2732 to alanine 2742 are compositionally biased toward polar residues. Over residues serine 2750 to alanine 2768 the composition is skewed to basic and acidic residues. 2 stretches are compositionally biased toward low complexity: residues proline 2772–threonine 2785 and asparagine 2798–histidine 2821. Pro residues predominate over residues leucine 2822–threonine 2849. Over residues proline 2850 to threonine 2860 the composition is skewed to low complexity.

Belongs to the TET family. As to quaternary structure, interacts (via C-terminus) with wds (via WD repeats). The cofactor is Fe(2+). It depends on Zn(2+) as a cofactor. In terms of tissue distribution, expressed in brain (at protein level).

Its subcellular location is the chromosome. It carries out the reaction an N(6)-methyl-2'-deoxyadenosine in DNA + 2-oxoglutarate + O2 = a 2'-deoxyadenosine in DNA + formaldehyde + succinate + CO2. The catalysed reaction is a 5-methyl-2'-deoxycytidine in DNA + 2-oxoglutarate + O2 = a 5-hydroxymethyl-2'-deoxycytidine in DNA + succinate + CO2. The enzyme catalyses a 5-hydroxymethyl-2'-deoxycytidine in DNA + 2-oxoglutarate + O2 = a 5-formyl-2'-deoxycytidine in DNA + succinate + CO2 + H2O. It catalyses the reaction a 5-formyl-2'-deoxycytidine in DNA + 2-oxoglutarate + O2 = a 5-carboxyl-2'-deoxycytidine in DNA + succinate + CO2 + H(+). Functionally, dioxygenase that specifically demethylates DNA methylated on the 6th position of adenine (N(6)-methyladenosine) DNA. N(6)-methyladenosine (m6A) DNA is present at a relatively high level at the very earliest embryonic stages but at low levels at the late embryonic stages and may act as a regulator of gene expression. Promotes differentiation of early germ cells in ovary. Contributes to neuronal morphology, development, and function in the brain. By interacting with histone modifier wds, binds to a specific set of genes, modulates intragenic (N(6)-methyladenosine) DNA levels and thereby maintains transcriptional activation. Also able to catalyze the conversion of the modified genomic base 5-methylcytosine (5mC) into 5-hydroxymethylcytosine (5hmC). The sequence is that of Methylcytosine dioxygenase TET from Drosophila melanogaster (Fruit fly).